The sequence spans 361 residues: uncharacterized protein (361 aa).

This is an uncharacterized protein from Methanothermobacter thermautotrophicus (Methanobacterium thermoformicicum).